Here is a 257-residue protein sequence, read N- to C-terminus: Geranylgeranylglyceryl phosphate synthase (257 aa).

2 residues coordinate Mg(2+): D27 and T57. Sn-glycerol 1-phosphate-binding positions include 175 to 181, 207 to 208, and 229 to 230; these read YLEAGSG, GG, and GN.

The protein belongs to the GGGP/HepGP synthase family. Group II subfamily. It depends on Mg(2+) as a cofactor.

It is found in the cytoplasm. The catalysed reaction is sn-glycerol 1-phosphate + (2E,6E,10E)-geranylgeranyl diphosphate = sn-3-O-(geranylgeranyl)glycerol 1-phosphate + diphosphate. The protein operates within membrane lipid metabolism; glycerophospholipid metabolism. Its function is as follows. Prenyltransferase that catalyzes the transfer of the geranylgeranyl moiety of geranylgeranyl diphosphate (GGPP) to the C3 hydroxyl of sn-glycerol-1-phosphate (G1P). This reaction is the first ether-bond-formation step in the biosynthesis of archaeal membrane lipids. This is Geranylgeranylglyceryl phosphate synthase from Sulfolobus acidocaldarius (strain ATCC 33909 / DSM 639 / JCM 8929 / NBRC 15157 / NCIMB 11770).